A 172-amino-acid chain; its full sequence is NADH-quinone oxidoreductase subunit B (172 aa).

[4Fe-4S] cluster contacts are provided by Cys-46, Cys-47, Cys-111, and Cys-141.

Belongs to the complex I 20 kDa subunit family. In terms of assembly, NDH-1 is composed of 14 different subunits. Subunits NuoB, C, D, E, F, and G constitute the peripheral sector of the complex. It depends on [4Fe-4S] cluster as a cofactor.

It is found in the cell membrane. The catalysed reaction is a quinone + NADH + 5 H(+)(in) = a quinol + NAD(+) + 4 H(+)(out). NDH-1 shuttles electrons from NADH, via FMN and iron-sulfur (Fe-S) centers, to quinones in the respiratory chain. The immediate electron acceptor for the enzyme in this species is believed to be a menaquinone. Couples the redox reaction to proton translocation (for every two electrons transferred, four hydrogen ions are translocated across the cytoplasmic membrane), and thus conserves the redox energy in a proton gradient. In Bacillus cereus (strain G9842), this protein is NADH-quinone oxidoreductase subunit B.